The chain runs to 182 residues: Large ribosomal subunit protein uL5 (182 aa).

Belongs to the universal ribosomal protein uL5 family. Part of the 50S ribosomal subunit; part of the 5S rRNA/L5/L18/L25 subcomplex. Contacts the 5S rRNA and the P site tRNA. Forms a bridge to the 30S subunit in the 70S ribosome.

In terms of biological role, this is one of the proteins that bind and probably mediate the attachment of the 5S RNA into the large ribosomal subunit, where it forms part of the central protuberance. In the 70S ribosome it contacts protein S13 of the 30S subunit (bridge B1b), connecting the 2 subunits; this bridge is implicated in subunit movement. Contacts the P site tRNA; the 5S rRNA and some of its associated proteins might help stabilize positioning of ribosome-bound tRNAs. The protein is Large ribosomal subunit protein uL5 of Nostoc sp. (strain PCC 7120 / SAG 25.82 / UTEX 2576).